A 301-amino-acid chain; its full sequence is tRNA pseudouridine synthase B (301 aa).

D45 functions as the Nucleophile in the catalytic mechanism.

This sequence belongs to the pseudouridine synthase TruB family. Type 1 subfamily.

The enzyme catalyses uridine(55) in tRNA = pseudouridine(55) in tRNA. Responsible for synthesis of pseudouridine from uracil-55 in the psi GC loop of transfer RNAs. This is tRNA pseudouridine synthase B from Streptomyces avermitilis (strain ATCC 31267 / DSM 46492 / JCM 5070 / NBRC 14893 / NCIMB 12804 / NRRL 8165 / MA-4680).